Reading from the N-terminus, the 315-residue chain is GTP cyclohydrolase MptA 1 (315 aa).

Belongs to the GTP cyclohydrolase IV family. In terms of assembly, homodimer. Fe(2+) serves as cofactor.

The catalysed reaction is GTP + H2O = 7,8-dihydroneopterin 2',3'-cyclic phosphate + formate + diphosphate + H(+). Its pathway is cofactor biosynthesis; 5,6,7,8-tetrahydromethanopterin biosynthesis. Its function is as follows. Converts GTP to 7,8-dihydro-D-neopterin 2',3'-cyclic phosphate, the first intermediate in the biosynthesis of coenzyme methanopterin. The sequence is that of GTP cyclohydrolase MptA 1 from Methanocella arvoryzae (strain DSM 22066 / NBRC 105507 / MRE50).